The following is a 681-amino-acid chain: DNA ligase (681 aa).

Residues 44–48 (DYIYD), 94–95 (SL), and E124 contribute to the NAD(+) site. The active-site N6-AMP-lysine intermediate is K126. The NAD(+) site is built by R147, E181, K297, and K321. C415, C418, C433, and C438 together coordinate Zn(2+). Residues 598 to 681 (DETSFFYGKK…EAQAKEGTDK (84 aa)) form the BRCT domain.

This sequence belongs to the NAD-dependent DNA ligase family. LigA subfamily. It depends on Mg(2+) as a cofactor. Mn(2+) is required as a cofactor.

The catalysed reaction is NAD(+) + (deoxyribonucleotide)n-3'-hydroxyl + 5'-phospho-(deoxyribonucleotide)m = (deoxyribonucleotide)n+m + AMP + beta-nicotinamide D-nucleotide.. In terms of biological role, DNA ligase that catalyzes the formation of phosphodiester linkages between 5'-phosphoryl and 3'-hydroxyl groups in double-stranded DNA using NAD as a coenzyme and as the energy source for the reaction. It is essential for DNA replication and repair of damaged DNA. This chain is DNA ligase, found in Leuconostoc citreum (strain KM20).